The sequence spans 549 residues: Dihydroxy-acid dehydratase (549 aa).

Position 78 (Asp78) interacts with Mg(2+). Cys119 serves as a coordination point for [2Fe-2S] cluster. 2 residues coordinate Mg(2+): Asp120 and Lys121. An N6-carboxylysine modification is found at Lys121. Cys192 is a binding site for [2Fe-2S] cluster. Residue Glu439 participates in Mg(2+) binding. Residue Ser465 is the Proton acceptor of the active site.

It belongs to the IlvD/Edd family. In terms of assembly, homodimer. The cofactor is [2Fe-2S] cluster. Mg(2+) serves as cofactor.

It carries out the reaction (2R)-2,3-dihydroxy-3-methylbutanoate = 3-methyl-2-oxobutanoate + H2O. It catalyses the reaction (2R,3R)-2,3-dihydroxy-3-methylpentanoate = (S)-3-methyl-2-oxopentanoate + H2O. It participates in amino-acid biosynthesis; L-isoleucine biosynthesis; L-isoleucine from 2-oxobutanoate: step 3/4. Its pathway is amino-acid biosynthesis; L-valine biosynthesis; L-valine from pyruvate: step 3/4. Functionally, functions in the biosynthesis of branched-chain amino acids. Catalyzes the dehydration of (2R,3R)-2,3-dihydroxy-3-methylpentanoate (2,3-dihydroxy-3-methylvalerate) into 2-oxo-3-methylpentanoate (2-oxo-3-methylvalerate) and of (2R)-2,3-dihydroxy-3-methylbutanoate (2,3-dihydroxyisovalerate) into 2-oxo-3-methylbutanoate (2-oxoisovalerate), the penultimate precursor to L-isoleucine and L-valine, respectively. This is Dihydroxy-acid dehydratase from Endomicrobium trichonymphae.